Consider the following 26-residue polypeptide: AMP deaminase 1 (26 aa).

The protein belongs to the metallo-dependent hydrolases superfamily. Adenosine and AMP deaminases family. As to quaternary structure, homotetramer. Zn(2+) is required as a cofactor.

It carries out the reaction AMP + H2O + H(+) = IMP + NH4(+). The protein operates within purine metabolism; IMP biosynthesis via salvage pathway; IMP from AMP: step 1/1. In terms of biological role, AMP deaminase plays a critical role in energy metabolism. This is AMP deaminase 1 (AMPD1) from Oryctolagus cuniculus (Rabbit).